We begin with the raw amino-acid sequence, 114 residues long: UPF0342 protein LSEI_1724 (114 aa).

The protein belongs to the UPF0342 family.

This is UPF0342 protein LSEI_1724 from Lacticaseibacillus paracasei (strain ATCC 334 / BCRC 17002 / CCUG 31169 / CIP 107868 / KCTC 3260 / NRRL B-441) (Lactobacillus paracasei).